A 177-amino-acid polypeptide reads, in one-letter code: ADP-ribosylation factor-like protein 3 (177 aa).

Gly-2 carries the N-myristoyl glycine lipid modification. GTP contacts are provided by residues 23-31 (GLDNAGKTT), 125-128 (NKQD), and Ala-159.

Belongs to the small GTPase superfamily. Arf family.

The protein resides in the golgi apparatus membrane. It localises to the cytoplasm. It is found in the cytoskeleton. The protein localises to the spindle. Its subcellular location is the nucleus. The protein resides in the microtubule organizing center. In terms of biological role, small GTP-binding protein which cycles between an inactive GDP-bound and an active GTP-bound form, and the rate of cycling is regulated by guanine nucleotide exchange factors (GEF) and GTPase-activating proteins (GAP). Required for normal cytokinesis and cilia signaling. Required for targeting proteins to the ciliary membrane by releasing myristoylated protein from unc119 cargo adapters into the cilium. This is ADP-ribosylation factor-like protein 3 from Chlamydomonas reinhardtii (Chlamydomonas smithii).